A 100-amino-acid polypeptide reads, in one-letter code: Elevenin-Vc1 (100 aa).

The first 24 residues, 1 to 24, serve as a signal peptide directing secretion; the sequence is MAPSQKALLVLVLSMLLTASDSWA. Cys-29 and Cys-38 form a disulfide bridge. Residues 44–100 constitute a propeptide that is removed on maturation; it reads KRGGDSLSVGGSAELDDALTDPFLRSEEPREWRELTRLSRVLQTFLSHPTGETEQHD.

The protein belongs to the elevenin family. As to quaternary structure, monomer. In terms of tissue distribution, expressed by the venom duct.

It is found in the secreted. In terms of biological role, may mimic the function of prey elevenin neuropeptide. In vivo, intracranial injection in mice induces hyperactivity (tested at 5 and 10 nM). This is Elevenin-Vc1 from Conus victoriae (Queen Victoria cone).